Here is a 242-residue protein sequence, read N- to C-terminus: MTNHKKEALLQNFNKKFADKMHMLKLNYDHLPLYQQAFSHSSFINDFNMDRLAHNERLEFLGDAVLELTVSRYLFDKYPELPEGNLTKMRATIVCEPSLVIFANKIQLNELILLGKGEEKTGGRTRPSLVSDAFEAFVGALYLDQGLDAVWQFSEEVIFPHVEDDELMGVVDFKTQFQELIHRLSKGNVTYRLIDEQGPAHHRLFTSEVLLEGEPVAKGQGRTKKESEQKAAEKAYNDMKKK.

One can recognise an RNase III domain in the interval 10–146 (LQNFNKKFAD…FVGALYLDQG (137 aa)). Glu59 provides a ligand contact to Mg(2+). Asp63 is a catalytic residue. Residues Asp132 and Glu135 each coordinate Mg(2+). Residue Glu135 is part of the active site. The DRBM domain maps to 172–241 (DFKTQFQELI…AEKAYNDMKK (70 aa)). The disordered stretch occupies residues 216–242 (VAKGQGRTKKESEQKAAEKAYNDMKKK). The segment covering 223–242 (TKKESEQKAAEKAYNDMKKK) has biased composition (basic and acidic residues).

It belongs to the ribonuclease III family. Homodimer. It depends on Mg(2+) as a cofactor.

Its subcellular location is the cytoplasm. It carries out the reaction Endonucleolytic cleavage to 5'-phosphomonoester.. Its function is as follows. Digests double-stranded RNA. Involved in the processing of primary rRNA transcript to yield the immediate precursors to the large and small rRNAs (23S and 16S). Processes some mRNAs, and tRNAs when they are encoded in the rRNA operon. Processes pre-crRNA and tracrRNA of type II CRISPR loci if present in the organism. This is Ribonuclease 3 from Staphylococcus carnosus (strain TM300).